The chain runs to 698 residues: Protein let-99 (698 aa).

In terms of domain architecture, DEP spans 23 to 107 (FRSNLSLKTN…SESRIYLFMK (85 aa)). Disordered regions lie at residues 115–188 (PKPR…DDEI) and 653–672 (ITRS…QASP). Basic residues predominate over residues 146-157 (RPPKARLPRRLS). Residues 178-188 (HGFDDHKDDEI) show a composition bias toward basic and acidic residues.

Its subcellular location is the cytoplasm. The protein localises to the cell cortex. Its function is as follows. Required for the proper orientation of spindles after the establishment of polarity. May play a role in interactions between the astral microtubules and the cortical cytoskeleton. Required for asymmetric forces on nuclei and spindles. Acts downstream of the PAR signaling as an intermediate that transduces polarity information to the machinery that positions the mitotic spindle, possibly by regulating force generation. Regulates gpr-1/2 asymmetric cortical localization during the first embryonic cell divisions. Acts antagonistically to the gpr-1/2 signaling pathway. Regulates mes-1 expression and/or localization pattern during early embryogenesis. The chain is Protein let-99 (let-99) from Caenorhabditis elegans.